We begin with the raw amino-acid sequence, 369 residues long: Molybdenum import ATP-binding protein ModC (369 aa).

The 237-residue stretch at 7-243 (PGQAGIHARF…LDLPMAMTDD (237 aa)) folds into the ABC transporter domain. 41–48 (GQSGSGKT) provides a ligand contact to ATP. The Mop domain occupies 304 to 369 (EGSILNVLAV…AQIKAVSLLA (66 aa)).

This sequence belongs to the ABC transporter superfamily. Molybdate importer (TC 3.A.1.8) family. As to quaternary structure, the complex is composed of two ATP-binding proteins (ModC), two transmembrane proteins (ModB) and a solute-binding protein (ModA).

It localises to the cell inner membrane. It catalyses the reaction molybdate(out) + ATP + H2O = molybdate(in) + ADP + phosphate + H(+). Part of the ABC transporter complex ModABC involved in molybdenum import. Responsible for energy coupling to the transport system. The sequence is that of Molybdenum import ATP-binding protein ModC from Bordetella bronchiseptica (strain ATCC BAA-588 / NCTC 13252 / RB50) (Alcaligenes bronchisepticus).